The chain runs to 507 residues: Solute carrier family 2, facilitated glucose transporter member 6 (507 aa).

The interval 1 to 28 (MQEPLLGAEGPDYDTFPEKPPPSPGDRA) is disordered. The Cytoplasmic portion of the chain corresponds to 1–37 (MQEPLLGAEGPDYDTFPEKPPPSPGDRARVGTLQNKR). The short motif at 5-6 (LL) is the Dileucine internalization motif element. Phosphoserine is present on serine 23. The chain crosses the membrane as a helical span at residues 38 to 58 (VFLATFAAVLGNFSFGYALVY). The Extracellular portion of the chain corresponds to 59–81 (TSPVIPALERSLDPDLHLTKSQA). The helical transmembrane segment at 82–102 (SWFGSVFTLGAAAGGLSAMIL) threads the bilayer. Residues 103–111 (NDLLGRKLS) are Cytoplasmic-facing. A helical membrane pass occupies residues 112-132 (IMFSAVPSAAGYALMAGAHGL). Residues 133–140 (WMLLLGRT) lie on the Extracellular side of the membrane. Residues 141–161 (LTGFAGGLTAACIPVYVSEIA) traverse the membrane as a helical segment. The Cytoplasmic portion of the chain corresponds to 162 to 168 (PPGVRGA). The helical transmembrane segment at 169–189 (LGATPQLMAVFGSLSLYALGL) threads the bilayer. An a D-hexose-binding site is contributed by glutamine 174. Residues 190-194 (LLPWR) lie on the Extracellular side of the membrane. A helical transmembrane segment spans residues 195-215 (WLAVAGEAPVLIMILLLSFMP). Residues 216-289 (NSPRFLLSRG…LLMRLLQQLT (74 aa)) are Cytoplasmic-facing. A D-hexose is bound at residue 286 to 287 (QQ). Residues 290-310 (GITPILVYLQSIFDSTAVLLP) form a helical membrane-spanning segment. The Extracellular portion of the chain corresponds to 311–314 (PKDD). The chain crosses the membrane as a helical span at residues 315 to 335 (AAIVGAVRLLSVLIAALTMDL). The Cytoplasmic portion of the chain corresponds to 336 to 339 (AGRK). A helical transmembrane segment spans residues 340 to 360 (VLLFVSAAIMFAANLTLGLYI). Residues 361-395 (HFGPRPLSPNSTAGLESESWGDLAQPLAAPAGYLT) lie on the Extracellular side of the membrane. Asparagine 370 carries N-linked (GlcNAc...) asparagine glycosylation. Residues 396-416 (LVPLLATMLFIMGYAVGWGPI) form a helical membrane-spanning segment. Residues 417-435 (TWLLMSEVLPLRARGVASG) lie on the Cytoplasmic side of the membrane. Tryptophan 418 is a binding site for a D-hexose. A helical transmembrane segment spans residues 436-456 (LCVLASWLTAFVLTKSFLPVV). Residues 457 to 462 (STFGLQ) lie on the Extracellular side of the membrane. A helical membrane pass occupies residues 463–483 (VPFFFFAAICLVSLVFTGCCV). Over 484 to 507 (PETKGRSLEQIESFFRTGRRSFLR) the chain is Cytoplasmic.

The protein belongs to the major facilitator superfamily. Sugar transporter (TC 2.A.1.1) family. Glucose transporter subfamily. As to expression, highly expressed in brain, spleen and peripheral blood leukocytes.

The protein localises to the lysosome membrane. Functionally, probable sugar transporter that acts as a regulator of glycolysis in macrophages. Does not transport glucose. In Homo sapiens (Human), this protein is Solute carrier family 2, facilitated glucose transporter member 6.